The following is a 266-amino-acid chain: Type III pantothenate kinase (266 aa).

6 to 13 (DVGNSHTV) contributes to the ATP binding site. 112–115 (GIDR) provides a ligand contact to substrate. The active-site Proton acceptor is Asp-114. K(+) is bound at residue Asp-134. An ATP-binding site is contributed by Thr-137. Thr-190 serves as a coordination point for substrate.

Belongs to the type III pantothenate kinase family. In terms of assembly, homodimer. The cofactor is NH4(+). K(+) serves as cofactor.

Its subcellular location is the cytoplasm. It carries out the reaction (R)-pantothenate + ATP = (R)-4'-phosphopantothenate + ADP + H(+). It functions in the pathway cofactor biosynthesis; coenzyme A biosynthesis; CoA from (R)-pantothenate: step 1/5. Functionally, catalyzes the phosphorylation of pantothenate (Pan), the first step in CoA biosynthesis. The sequence is that of Type III pantothenate kinase from Desulfotalea psychrophila (strain LSv54 / DSM 12343).